Here is a 552-residue protein sequence, read N- to C-terminus: Arginine--tRNA ligase (552 aa).

The 'HIGH' region motif lies at 124–134 (GNPTGPLHLAH).

It belongs to the class-I aminoacyl-tRNA synthetase family. As to quaternary structure, monomer.

The protein resides in the cytoplasm. It catalyses the reaction tRNA(Arg) + L-arginine + ATP = L-arginyl-tRNA(Arg) + AMP + diphosphate. This is Arginine--tRNA ligase from Tropheryma whipplei (strain Twist) (Whipple's bacillus).